We begin with the raw amino-acid sequence, 227 residues long: tRNA (guanine-N(7)-)-methyltransferase (227 aa).

The S-adenosyl-L-methionine site is built by E60, E85, D112, and D135. Residue D135 is part of the active site. Substrate contacts are provided by residues K139, D171, and 206–209; that span reads TKFE.

This sequence belongs to the class I-like SAM-binding methyltransferase superfamily. TrmB family.

The catalysed reaction is guanosine(46) in tRNA + S-adenosyl-L-methionine = N(7)-methylguanosine(46) in tRNA + S-adenosyl-L-homocysteine. It participates in tRNA modification; N(7)-methylguanine-tRNA biosynthesis. Its function is as follows. Catalyzes the formation of N(7)-methylguanine at position 46 (m7G46) in tRNA. This is tRNA (guanine-N(7)-)-methyltransferase from Thiobacillus denitrificans (strain ATCC 25259 / T1).